The following is a 263-amino-acid chain: Phosphatidylglycerol--prolipoprotein diacylglyceryl transferase (263 aa).

The next 4 helical transmembrane spans lie at 6 to 26 (VIFSIGPVSIYWYSLAYVLGI), 50 to 70 (LLTATIVGIILGGRLGYVLIY), 85 to 105 (TWEGGMSFHGGAIGVLLAVII), and 112 to 132 (IPIFYALDLVSCGVPIGLFLG). Arg133 lines the a 1,2-diacyl-sn-glycero-3-phospho-(1'-sn-glycerol) pocket. The next 3 helical transmembrane spans lie at 169 to 189 (LYEALFEGLLLFAVANSLFFL), 197 to 217 (GALTGIAVMWYGIARFFVEFF), and 233 to 253 (MGQLLSIPMVLLGMLVYLGAL).

Belongs to the Lgt family.

The protein localises to the cell membrane. It carries out the reaction L-cysteinyl-[prolipoprotein] + a 1,2-diacyl-sn-glycero-3-phospho-(1'-sn-glycerol) = an S-1,2-diacyl-sn-glyceryl-L-cysteinyl-[prolipoprotein] + sn-glycerol 1-phosphate + H(+). Its pathway is protein modification; lipoprotein biosynthesis (diacylglyceryl transfer). In terms of biological role, catalyzes the transfer of the diacylglyceryl group from phosphatidylglycerol to the sulfhydryl group of the N-terminal cysteine of a prolipoprotein, the first step in the formation of mature lipoproteins. In Wolbachia sp. subsp. Drosophila simulans (strain wRi), this protein is Phosphatidylglycerol--prolipoprotein diacylglyceryl transferase.